The following is a 1161-amino-acid chain: Translation initiation factor IF-2 (1161 aa).

The segment at 67-561 is disordered; the sequence is KSSFKAANEQ…RRAMELRAAK (495 aa). Residues 83 to 105 are compositionally biased toward basic and acidic residues; that stretch reads QNKDSNSRSKPLNKEKPSKESLN. The segment covering 139 to 154 has biased composition (polar residues); sequence SRISNLQSQVLPNSHN. 2 stretches are compositionally biased toward basic and acidic residues: residues 164-180 and 211-220; these read NPNE…EKKS and KDIKANKKND. Composition is skewed to low complexity over residues 224–250 and 268–282; these read NQRP…PRIK and NSNR…PPSN. Composition is skewed to polar residues over residues 295–311, 352–362, and 380–393; these read RQVT…QGVS, RQGAPNRQGSP, and LNRS…QNPS. The span at 412–432 shows a compositional bias: basic and acidic residues; sequence ASDKEKLNRSNFEKQKVEPPK. Positions 440 to 461 are enriched in polar residues; it reads SRLNASPTAKKTPHRSFTNNSK. 2 stretches are compositionally biased toward basic and acidic residues: residues 464–478 and 543–561; these read GRSD…EALR and KETT…RAAK. One can recognise a tr-type G domain in the interval 653–830; sequence KRPPVITVMG…EVEDLQANPE (178 aa). Residues 662–669 are G1; the sequence is GHVDHGKT. 662 to 669 contributes to the GTP binding site; it reads GHVDHGKT. Residues 687–691 form a G2 region; the sequence is GITQH. Residues 712–715 form a G3 region; sequence DTPG. GTP is bound by residues 712-716 and 766-769; these read DTPGH and NKID. A G4 region spans residues 766-769; it reads NKID. A G5 region spans residues 802-804; it reads SAI.

The protein belongs to the TRAFAC class translation factor GTPase superfamily. Classic translation factor GTPase family. IF-2 subfamily.

It localises to the cytoplasm. Functionally, one of the essential components for the initiation of protein synthesis. Protects formylmethionyl-tRNA from spontaneous hydrolysis and promotes its binding to the 30S ribosomal subunits. Also involved in the hydrolysis of GTP during the formation of the 70S ribosomal complex. This Prochlorococcus marinus (strain MIT 9515) protein is Translation initiation factor IF-2.